A 130-amino-acid polypeptide reads, in one-letter code: Small ribosomal subunit protein uS8 (130 aa).

It belongs to the universal ribosomal protein uS8 family. In terms of assembly, part of the 30S ribosomal subunit.

Functionally, one of the primary rRNA binding proteins, it binds directly to 16S rRNA central domain where it helps coordinate assembly of the platform of the 30S subunit. In Natronomonas pharaonis (strain ATCC 35678 / DSM 2160 / CIP 103997 / JCM 8858 / NBRC 14720 / NCIMB 2260 / Gabara) (Halobacterium pharaonis), this protein is Small ribosomal subunit protein uS8.